The chain runs to 804 residues: Elongation factor G, mitochondrial (804 aa).

Residues 1–63 (MSMHRVARAV…RHFFQSPIIR (63 aa)) constitute a mitochondrion transit peptide. Residues 99 to 385 (RRVRNIGIAA…AVCDYLPNPA (287 aa)) form the tr-type G domain. Residues 108–115 (AHIDSGKT), 183–187 (DTPGH), and 237–240 (NKMD) each bind GTP.

Belongs to the TRAFAC class translation factor GTPase superfamily. Classic translation factor GTPase family. EF-G/EF-2 subfamily.

It localises to the mitochondrion. The protein operates within protein biosynthesis; polypeptide chain elongation. Mitochondrial GTPase that catalyzes the GTP-dependent ribosomal translocation step during translation elongation. During this step, the ribosome changes from the pre-translocational (PRE) to the post-translocational (POST) state as the newly formed A-site-bound peptidyl-tRNA and P-site-bound deacylated tRNA move to the P and E sites, respectively. Catalyzes the coordinated movement of the two tRNA molecules, the mRNA and conformational changes in the ribosome. The sequence is that of Elongation factor G, mitochondrial (mef1) from Sclerotinia sclerotiorum (strain ATCC 18683 / 1980 / Ss-1) (White mold).